Reading from the N-terminus, the 885-residue chain is DDT domain-containing protein DDB_G0282237 (885 aa).

The region spanning 20-125 (EEYFVIKFTK…GEIVSFKKAN (106 aa)) is the WAC domain. Disordered regions lie at residues 141 to 184 (ESDE…INAL), 201 to 264 (DDEN…SVRK), and 367 to 431 (LEDT…KENE). The span at 154–180 (SSSSSSTTTTTTTPTTPPTTTTTTSSS) shows a compositional bias: low complexity. Over residues 210 to 264 (KNNGDTSSDKKGEKEKEKEKEKEKEKEKEKEKEKEKEKEKEKEKEKDSDTKSVRK) the composition is skewed to basic and acidic residues. Residues 217-260 (SDKKGEKEKEKEKEKEKEKEKEKEKEKEKEKEKEKEKEKDSDTK) adopt a coiled-coil conformation. Residues 367-379 (LEDTEEESVDIES) show a composition bias toward acidic residues. Over residues 380–396 (NDNSNSNGNSNSNNNLD) the composition is skewed to low complexity. The DDT domain maps to 443-503 (SNTFGDFLMV…MKTIFTLPSY (61 aa)). Positions 530–565 (FQNEVKRIAIEEKEKQEKLKQLEEQNIRMLNLANEL) form a coiled coil. Disordered stretches follow at residues 562-632 (ANEL…WKEE) and 707-744 (KQDDAAAAAEDDDENNEDDEEQQQQEVKKPKGAKQKKP). A compositionally biased stretch (acidic residues) spans 567 to 577 (GSDDEDDEMKL). Positions 578-603 (DEDGNEIKKDVEMKDNDGTKDTKKDD) are enriched in basic and acidic residues. Coiled coils occupy residues 593–628 (NDGTKDTKKDDEENEEEEEEEEEEEEEVASDEGEEE) and 674–782 (ASEK…RDRN). 2 stretches are compositionally biased toward acidic residues: residues 604 to 631 (EENEEEEEEEEEEEEEVASDEGEEEWKE) and 715 to 729 (AEDDDENNEDDEEQQ).

The protein resides in the nucleus. This is DDT domain-containing protein DDB_G0282237 from Dictyostelium discoideum (Social amoeba).